The chain runs to 261 residues: CD40 ligand (261 aa).

At 1–22 the chain is on the cytoplasmic side; sequence MIETYNQPVPRSAATGPPVSMK. The chain crosses the membrane as a helical; Signal-anchor for type II membrane protein span at residues 23 to 43; the sequence is IFMYLLTVFLITQMIGSALFA. At 44–261 the chain is on the extracellular side; the sequence is VYLHRRLDKI…GFTSFGLLKL (218 aa). The THD domain maps to 122 to 261; it reads IAAHVISEAS…GFTSFGLLKL (140 aa). A disulfide bridge connects residues C178 and C218. The N-linked (GlcNAc...) asparagine glycan is linked to N240.

Belongs to the tumor necrosis factor family. As to quaternary structure, homotrimer. Interacts with CD28. CD40 ligand, soluble form: Exists as either a monomer or a homotrimer. Forms a ternary complex between CD40 and integrins for CD40-CD40LG signaling. In terms of processing, the soluble form derives from the membrane form by proteolytic processing.

It is found in the cell membrane. It localises to the cell surface. Its subcellular location is the secreted. Its function is as follows. Cytokine that acts as a ligand to CD40/TNFRSF5. Costimulates T-cell proliferation and cytokine production. Its cross-linking on T-cells generates a costimulatory signal which enhances the production of IL4 and IL10 in conjunction with the TCR/CD3 ligation and CD28 costimulation. Induces the activation of NF-kappa-B. Induces the activation of kinases MAPK8 and PAK2 in T-cells. Mediates B-cell proliferation in the absence of co-stimulus as well as IgE production in the presence of IL4. Involved in immunoglobulin class switching. Functionally, acts as a ligand for integrins, specifically ITGA5:ITGB1 and ITGAV:ITGB3; both integrins and the CD40 receptor are required for activation of CD40-CD40LG signaling, which have cell-type dependent effects, such as B-cell activation, NF-kappa-B signaling and anti-apoptotic signaling. The sequence is that of CD40 ligand (CD40LG) from Callithrix jacchus (White-tufted-ear marmoset).